We begin with the raw amino-acid sequence, 193 residues long: Interferon type A3 (193 aa).

The N-terminal stretch at 1–31 (MAVPASPQHPRGYGILLLTLLLKALATTASA) is a signal peptide. 3 disulfide bridges follow: cysteine 32–cysteine 129, cysteine 61–cysteine 155, and cysteine 68–cysteine 168. Residues asparagine 65, asparagine 71, asparagine 108, and asparagine 186 are each glycosylated (N-linked (GlcNAc...) asparagine).

It belongs to the alpha/beta interferon family.

It is found in the secreted. Has antiviral activities. This chain is Interferon type A3 (IFNA3), found in Gallus gallus (Chicken).